The chain runs to 348 residues: D-fructose 1,6-bisphosphatase class 2/sedoheptulose 1,7-bisphosphatase 2 (348 aa).

Residues aspartate 33, glutamate 57, aspartate 97, and glutamate 100 each contribute to the Mn(2+) site. Substrate-binding positions include 100–102 (EGT), tyrosine 131, 176–178 (RER), and 198–200 (DGD). Residue glutamate 225 coordinates Mn(2+).

The protein belongs to the FBPase class 2 family. As to quaternary structure, homotetramer.

The catalysed reaction is beta-D-fructose 1,6-bisphosphate + H2O = beta-D-fructose 6-phosphate + phosphate. It catalyses the reaction D-sedoheptulose 1,7-bisphosphate + H2O = D-sedoheptulose 7-phosphate + phosphate. The protein operates within carbohydrate biosynthesis; Calvin cycle. Catalyzes the hydrolysis of fructose 1,6-bisphosphate (Fru 1,6-P2) and sedoheptulose 1,7-bisphosphate (Sed 1,7-P2) to fructose 6-phosphate and sedoheptulose 7-phosphate, respectively. In Acaryochloris marina (strain MBIC 11017), this protein is D-fructose 1,6-bisphosphatase class 2/sedoheptulose 1,7-bisphosphatase 2.